Consider the following 183-residue polypeptide: Apo-citrate lyase phosphoribosyl-dephospho-CoA transferase (183 aa).

It belongs to the CitX family.

It catalyses the reaction apo-[citrate lyase ACP] + 2'-(5''-triphospho-alpha-D-ribosyl)-3'-dephospho-CoA = holo-[citrate lyase ACP] + diphosphate. Its function is as follows. Transfers 2-(5''-triphosphoribosyl)-3'-dephosphocoenzyme-A on a serine residue to the apo-acyl carrier protein (gamma chain) of the citrate lyase to yield holo-acyl carrier protein. The sequence is that of Apo-citrate lyase phosphoribosyl-dephospho-CoA transferase from Escherichia coli O7:K1 (strain IAI39 / ExPEC).